A 421-amino-acid chain; its full sequence is D-aspartate ligase (421 aa).

Positions 130-332 (YEVCEEYDLP…LARFVTEDRV (203 aa)) constitute an ATP-grasp domain. Residue 161-224 (PFEFPVALKP…QDFIPGDDSN (64 aa)) participates in ATP binding. Residues Asp290, Glu304, and Asn306 each coordinate Mg(2+).

Mg(2+) is required as a cofactor.

The catalysed reaction is [beta-GlcNAc-(1-&gt;4)-Mur2Ac(oyl-L-Ala-gamma-D-Glu-L-Lys-D-Ala-D-Ala)](n) + n D-aspartate + n ATP = [beta-GlcNAc-(1-&gt;4)-Mur2Ac(oyl-L-Ala-gamma-D-Glu-6-N-(beta-D-Asp)-L-Lys-D-Ala-D-Ala)]n + n ADP + n phosphate + n H(+). Its pathway is cell wall biogenesis; peptidoglycan biosynthesis. In terms of biological role, catalyzes the addition of D-aspartate onto the lysine residue in the peptidoglycan precursor UDP-MurNAc-pentapeptide. The ligation occurs between the beta-carboxylate of D-Asp and the epsilon-amino group of L-Lys. Is highly specific for D-aspartate, as L-aspartate, D-glutamate, D-alanine, D-iso-asparagine and D-malate are not substrates. This chain is D-aspartate ligase, found in Enterococcus faecium (strain Aus0004).